A 630-amino-acid chain; its full sequence is Probable potassium transport system protein Kup 1 (630 aa).

12 helical membrane-spanning segments follow: residues 15–35 (LLAM…TSPL), 58–78 (LISL…VLFL), 104–124 (TAIL…DAMI), 142–162 (PALS…LFAV), 173–193 (FFGP…FMHI), 208–228 (AVAF…AVFL), 252–272 (WFTV…AFVL), 290–310 (ALLP…QAVI), 342–362 (IYLP…VFIF), 368–388 (LATA…VLAF), 399–419 (AWWA…FLGA), and 424–444 (IHDG…IMWT).

Belongs to the HAK/KUP transporter (TC 2.A.72) family.

It is found in the cell inner membrane. It carries out the reaction K(+)(in) + H(+)(in) = K(+)(out) + H(+)(out). Functionally, transport of potassium into the cell. Likely operates as a K(+):H(+) symporter. The chain is Probable potassium transport system protein Kup 1 from Sinorhizobium medicae (strain WSM419) (Ensifer medicae).